Reading from the N-terminus, the 149-residue chain is MNPIRMKKLESEIIRQISTAILEGKVKDPRVFLPSFHRIEISEDLKYAKVYFTALCNNNERKKLTQGLVSCAGFLSSFVGKNLRLHTNPKFTFVWDNSYIKSLEVNRLIDDSAPKTLFEELHPNPEEDDGDTDAETLLEDSESGIERET.

Over residues 116–125 (TLFEELHPNP) the composition is skewed to basic and acidic residues. Residues 116 to 149 (TLFEELHPNPEEDDGDTDAETLLEDSESGIERET) are disordered. Residues 126 to 143 (EEDDGDTDAETLLEDSES) show a composition bias toward acidic residues.

This sequence belongs to the RbfA family. As to quaternary structure, monomer. Binds 30S ribosomal subunits, but not 50S ribosomal subunits or 70S ribosomes.

The protein localises to the cytoplasm. Functionally, one of several proteins that assist in the late maturation steps of the functional core of the 30S ribosomal subunit. Associates with free 30S ribosomal subunits (but not with 30S subunits that are part of 70S ribosomes or polysomes). Required for efficient processing of 16S rRNA. May interact with the 5'-terminal helix region of 16S rRNA. The chain is Ribosome-binding factor A from Leptospira biflexa serovar Patoc (strain Patoc 1 / Ames).